Here is a 572-residue protein sequence, read N- to C-terminus: Putative acyl-CoA synthetase CCNA_01223 (572 aa).

The protein belongs to the ATP-dependent AMP-binding enzyme family.

Its pathway is lipid metabolism; sphingolipid metabolism. Involved in de novo bacterial ceramide synthesis. In Caulobacter vibrioides (strain NA1000 / CB15N) (Caulobacter crescentus), this protein is Putative acyl-CoA synthetase CCNA_01223.